Reading from the N-terminus, the 164-residue chain is Endoribonuclease YbeY (164 aa).

3 residues coordinate Zn(2+): His120, His124, and His130.

The protein belongs to the endoribonuclease YbeY family. It depends on Zn(2+) as a cofactor.

It localises to the cytoplasm. Single strand-specific metallo-endoribonuclease involved in late-stage 70S ribosome quality control and in maturation of the 3' terminus of the 16S rRNA. This is Endoribonuclease YbeY from Acidothermus cellulolyticus (strain ATCC 43068 / DSM 8971 / 11B).